Here is a 1870-residue protein sequence, read N- to C-terminus: RNA1 polyprotein (1870 aa).

The 169-residue stretch at 486–654 folds into the SF3 helicase domain; the sequence is LEKLIELHNS…VPYNADDPCA (169 aa). Residue 515–522 coordinates ATP; the sequence is GASGTGKT. A helical membrane pass occupies residues 910-930; the sequence is SLWCMSGDASFVAGAATVFSV. Ser937 is subject to O-(5'-phospho-RNA)-serine. The Peptidase C3 domain maps to 963-1165; the sequence is SSCFGDSALW…ASFMPYHASL (203 aa). Active-site for picornain 3C-like protease activity residues include His1003, Glu1039, and Cys1128. The RdRp catalytic domain maps to 1445 to 1572; it reads NNILCCDYSR…SVSDAISSRF (128 aa).

Specific enzymatic cleavages by picornain 3C-like protease in vivo yield mature proteins. Picornain 3C-like protease is autocatalytically processed. In terms of processing, uridylylated by the polymerase and is covalently linked to the 5'-end of genomic RNA. This uridylylated form acts as a nucleotide-peptide primer for the polymerase.

The protein resides in the host membrane. Its subcellular location is the host cytoplasm. It is found in the host perinuclear region. The protein localises to the host endoplasmic reticulum. It catalyses the reaction RNA(n) + a ribonucleoside 5'-triphosphate = RNA(n+1) + diphosphate. Thiol protease that cleaves the RNA1 and RNA2 polyproteins. In terms of biological role, plays a role in RNA replication. It is covalently linked to the 5'terminus of both viral single-stranded RNA1 and RNA2 molecules. Functionally, down-regulates the RNA1 polyprotein processing and enhances trans-cleavage of RNA2 polyproteins. The protease cofactor and the putative helicase seem to target the replication complexes to ER membranes. Their physical association causes the membrane rearrangement of host ER that may result in formation of the small membranous vesicles that are the site of viral RNA synthesis. Its function is as follows. The protease cofactor and the putative helicase seem to target the replication complexes to ER membranes. Their physical association causes the membrane rearrangement of host ER that may result in formation of the small membranous vesicles that are the site of viral RNA synthesis. Replicates the viral genome. This chain is RNA1 polyprotein, found in Broad bean wilt virus 2 (BBWV-2).